The sequence spans 236 residues: Probable transcriptional regulatory protein FP0835 (236 aa).

It belongs to the TACO1 family.

It is found in the cytoplasm. This Flavobacterium psychrophilum (strain ATCC 49511 / DSM 21280 / CIP 103535 / JIP02/86) protein is Probable transcriptional regulatory protein FP0835.